The following is a 150-amino-acid chain: Leukotriene C4 synthase (150 aa).

Over 1-6 (MKDEVA) the chain is Cytoplasmic. Residues 7-27 (LLATVTLVGVLLQAYFSLQVI) traverse the membrane as a helical segment. Over 28 to 48 (SARRAFHVSPPLTSGPPEFER) the chain is Lumenal. Arginine 30 is a binding site for glutathione. Arginine 31 acts as the Proton donor in catalysis. Position 36 is a phosphoserine (serine 36). A helical membrane pass occupies residues 49 to 69 (VFRAQVNCSEYFPLFLATLWV). Glutathione is bound by residues 51–55 (RAQVN), glutamine 53, and 58–59 (EY). Residues 70–73 (AGIF) lie on the Cytoplasmic side of the membrane. A helical transmembrane segment spans residues 74–94 (FHEGAAALCGLFYLFARLRYF). Residue 93–97 (YFQGY) coordinates glutathione. Topologically, residues 95–104 (QGYARSAQLR) are lumenal. The active-site Proton acceptor is arginine 104. Residues 105 to 124 (LTPLYASARALWLLVAMAAL) form a helical membrane-spanning segment. Over 125–150 (GLLVHFLPGTLRTALFRWLQMLLPMA) the chain is Cytoplasmic.

The protein belongs to the MAPEG family. Homotrimer. Interacts with ALOX5AP and ALOX5. Phosphorylation at Ser-36 by RPS6KB1 inhibits the leukotriene-C4 synthase activity. Widely expressed.

The protein localises to the nucleus outer membrane. The protein resides in the endoplasmic reticulum membrane. It is found in the nucleus membrane. It catalyses the reaction leukotriene C4 = leukotriene A4 + glutathione. It carries out the reaction (13S,14S)-epoxy-(4Z,7Z,9E,11E,16Z,19Z)-docosahexaenoate + glutathione = (13R)-S-glutathionyl-(14S)-hydroxy-(4Z,7Z,9E,11E,16Z,19Z)-docosahexaenoate. It functions in the pathway lipid metabolism; leukotriene C4 biosynthesis. Its activity is regulated as follows. Inhibited by MK886. In terms of biological role, catalyzes the conjugation of leukotriene A4 with reduced glutathione (GSH) to form leukotriene C4 with high specificity. Can also catalyze the transfer of a glutathionyl group from glutathione (GSH) to 13(S),14(S)-epoxy-docosahexaenoic acid to form maresin conjugate in tissue regeneration 1 (MCTR1), a bioactive lipid mediator that possess potent anti-inflammatory and proresolving actions. This Mus musculus (Mouse) protein is Leukotriene C4 synthase (Ltc4s).